The chain runs to 116 residues: Large ribosomal subunit protein bL17 (116 aa).

It belongs to the bacterial ribosomal protein bL17 family. In terms of assembly, part of the 50S ribosomal subunit. Contacts protein L32.

The chain is Large ribosomal subunit protein bL17 from Synechococcus sp. (strain JA-3-3Ab) (Cyanobacteria bacterium Yellowstone A-Prime).